The sequence spans 412 residues: Gamma-glutamyl phosphate reductase (412 aa).

It belongs to the gamma-glutamyl phosphate reductase family.

It localises to the cytoplasm. It catalyses the reaction L-glutamate 5-semialdehyde + phosphate + NADP(+) = L-glutamyl 5-phosphate + NADPH + H(+). It functions in the pathway amino-acid biosynthesis; L-proline biosynthesis; L-glutamate 5-semialdehyde from L-glutamate: step 2/2. Functionally, catalyzes the NADPH-dependent reduction of L-glutamate 5-phosphate into L-glutamate 5-semialdehyde and phosphate. The product spontaneously undergoes cyclization to form 1-pyrroline-5-carboxylate. This Bartonella quintana (strain Toulouse) (Rochalimaea quintana) protein is Gamma-glutamyl phosphate reductase.